The primary structure comprises 363 residues: Crh-like protein 3 (363 aa).

The signal sequence occupies residues 1 to 19; sequence MSLLYLVALFVASICSVTA. Residues Cys25 and Cys32 are joined by a disulfide bond. Residues 26–237 enclose the GH16 domain; that stretch reads NPLTTTCPPD…YSKAPFTMVL (212 aa). 3 N-linked (GlcNAc...) asparagine glycosylation sites follow: Asn41, Asn47, and Asn56. The active-site Nucleophile is Glu118. Glu122 functions as the Proton donor in the catalytic mechanism. Chitin is bound at residue Glu122. Asn127, Asn141, and Asn161 each carry an N-linked (GlcNAc...) asparagine glycan. Arg203, Trp207, and Thr218 together coordinate chitin. Residues Asn252 and Asn269 are each glycosylated (N-linked (GlcNAc...) asparagine). The helical transmembrane segment at 298 to 318 threads the bilayer; that stretch reads VYIGAGCVGAALLAGFIFFFI.

Belongs to the glycosyl hydrolase 16 family. CRH1 subfamily. Post-translationally, the GPI-like anchor contains a phosphoceramide lipid group. The anchor position has not been determined.

The protein resides in the cell membrane. Its subcellular location is the secreted. It localises to the cell wall. The catalysed reaction is Random endo-hydrolysis of N-acetyl-beta-D-glucosaminide (1-&gt;4)-beta-linkages in chitin and chitodextrins.. Functionally, dual chitinase/transglycosylase that plays a role in cell wall architecture. Chitinase and transglycosylase activities are coupled. Required for the polysaccharide cross-linking at the septa and the cell wall. More specifically, transfers chitin to 1,6-beta-glucan in the cell wall. This chain is Crh-like protein 3, found in Aspergillus fumigatus (strain ATCC MYA-4609 / CBS 101355 / FGSC A1100 / Af293) (Neosartorya fumigata).